A 301-amino-acid chain; its full sequence is Mas-related G-protein coupled receptor member A6 (301 aa).

The Extracellular portion of the chain corresponds to 1 to 15 (MHRSISIRILITNLM). Residues 16-36 (IVILGLVGLTGNAIVFWLLLF) traverse the membrane as a helical segment. The Cytoplasmic segment spans residues 37 to 42 (RLRRNA). The chain crosses the membrane as a helical span at residues 43–63 (FSIYILNLALADFLFLLCHII). At 64–77 (ASTEHILTFSSPNS) the chain is on the extracellular side. Residues 78–98 (IFINCLYTFRVLLYIAGLNML) form a helical membrane-spanning segment. Over 99–128 (SAISIERCLSVMCPIWYRCHRPEHTSTVMC) the chain is Cytoplasmic. The chain crosses the membrane as a helical span at residues 129–149 (AMIWVLSLLLCILYRYFCGFL). The Extracellular segment spans residues 150 to 163 (DTKYEDDYGCLAMN). A helical transmembrane segment spans residues 164 to 184 (FLTTAYLMFLFVVLCVSSLAL). Residues 185-203 (LARLFCGAGRMKLTRLYVT) lie on the Cytoplasmic side of the membrane. Residues 204–224 (ITLTLLVFLLCGLPCGFYWFL) form a helical membrane-spanning segment. Residues 225–240 (LSKIKNVFSVFEFSLY) lie on the Extracellular side of the membrane. Residues 241–261 (LTSVVLTAINSCANPIIYFFV) form a helical membrane-spanning segment. Residues 262 to 301 (GSFRHRLKHQTLKMVLQSALQDTPETPENMVEMSRNKAEL) lie on the Cytoplasmic side of the membrane.

Belongs to the G-protein coupled receptor 1 family. Mas subfamily. Expressed in a subset of sensory neurons that includes nociceptors. Expressed in the subclass of non-peptidergic sensory neurons that are IB4(+) and VR1(-).

It localises to the cell membrane. Orphan receptor. May be a receptor for RFamide-family neuropeptides such as NPFF and NPAF, which are analgesic in vivo. May regulate nociceptor function and/or development, including the sensation or modulation of pain. The protein is Mas-related G-protein coupled receptor member A6 (Mrgpra6) of Mus musculus (Mouse).